The sequence spans 153 residues: Membrane-spanning 4-domains subfamily A member 13 (153 aa).

A run of 4 helical transmembrane segments spans residues 1–21, 36–56, 71–91, and 111–131; these read MTGI…MGQI, GCSL…RATW, ILCM…LSTF, and VLLS…IFGC.

It belongs to the MS4A family.

The protein localises to the membrane. May be involved in signal transduction as a component of a multimeric receptor complex. The polypeptide is Membrane-spanning 4-domains subfamily A member 13 (MS4A13) (Bos taurus (Bovine)).